The sequence spans 500 residues: L-arabinose isomerase (500 aa).

Positions 306, 333, 350, and 450 each coordinate Mn(2+).

The protein belongs to the arabinose isomerase family. In terms of assembly, homohexamer. Requires Mn(2+) as cofactor.

The catalysed reaction is beta-L-arabinopyranose = L-ribulose. The protein operates within carbohydrate degradation; L-arabinose degradation via L-ribulose; D-xylulose 5-phosphate from L-arabinose (bacterial route): step 1/3. In terms of biological role, catalyzes the conversion of L-arabinose to L-ribulose. The chain is L-arabinose isomerase from Escherichia coli O139:H28 (strain E24377A / ETEC).